The sequence spans 97 residues: uncharacterized protein (97 aa).

Residues 58 to 97 form a disordered region; the sequence is SLLLPRTVQTGGTEREKPGPGQRKRGAHCSACKRSSTRPS.

This is an uncharacterized protein from Homo sapiens (Human).